The sequence spans 443 residues: Probable glycine dehydrogenase (decarboxylating) subunit 1 (443 aa).

The protein belongs to the GcvP family. N-terminal subunit subfamily. As to quaternary structure, the glycine cleavage system is composed of four proteins: P, T, L and H. In this organism, the P 'protein' is a heterodimer of two subunits.

It catalyses the reaction N(6)-[(R)-lipoyl]-L-lysyl-[glycine-cleavage complex H protein] + glycine + H(+) = N(6)-[(R)-S(8)-aminomethyldihydrolipoyl]-L-lysyl-[glycine-cleavage complex H protein] + CO2. In terms of biological role, the glycine cleavage system catalyzes the degradation of glycine. The P protein binds the alpha-amino group of glycine through its pyridoxal phosphate cofactor; CO(2) is released and the remaining methylamine moiety is then transferred to the lipoamide cofactor of the H protein. This Desulfovibrio desulfuricans (strain ATCC 27774 / DSM 6949 / MB) protein is Probable glycine dehydrogenase (decarboxylating) subunit 1.